A 362-amino-acid polypeptide reads, in one-letter code: MAVTITLKTLQQQTFKIRMEPDETVKVLKEKIEAEKGRDAFPVAGQKLIYAGKILSDDVPIRDYRIDEKNFVVVMVTKAKTSPGTSVPSEASPTATPESSTSFPSAPASGMSHPPPTAREDKSPSEESAPTTSPESVSGSVPSSGSGGREEDAASTLVTGSEYETMLTEIMSMGYERERVVAALRASYNNPHRAVEYLLTGIPGSPEPEHGSVQESQVSEQPSTEAGENPLEFLRDQPQFQNMRQVIQQNPALLPALLQQLGQENPQLLQQISRHQEQFIQMLNEPPGELVDISDVEGEVGAIGEEAPQMNYIQVTPQEKEAIERLKALGFPESLVIQAYFACEKNENLAANFLLSQNFDDE.

Positions 1–81 (MAVTITLKTL…VVVMVTKAKT (81 aa)) constitute a Ubiquitin-like domain. Disordered regions lie at residues 80-160 (KTSP…LVTG) and 201-227 (GIPGSPEPEHGSVQESQVSEQPSTEAG). Positions 88-109 (PSEASPTATPESSTSFPSAPAS) are enriched in low complexity. A Glycyl lysine isopeptide (Lys-Gly) (interchain with G-Cter in ubiquitin) cross-link involves residue lysine 122. A phosphoserine mark is found at serine 123, serine 128, serine 133, serine 136, and serine 138. Low complexity predominate over residues 126-144 (EESAPTTSPESVSGSVPSS). The UBA 1 domain occupies 161 to 201 (SEYETMLTEIMSMGYERERVVAALRASYNNPHRAVEYLLTG). A phosphoserine mark is found at serine 205, serine 294, and serine 356. The region spanning 317-357 (PQEKEAIERLKALGFPESLVIQAYFACEKNENLAANFLLSQ) is the UBA 2 domain.

The protein belongs to the RAD23 family. As to quaternary structure, interacts with XPC; the interaction is suggesting the existence of a functional equivalent variant XPC complex. Interacts with PSMD4 and PSMC5. Interacts with ATXN3. Interacts with UBQLN2.

It is found in the nucleus. Its function is as follows. Multiubiquitin chain receptor involved in modulation of proteasomal degradation. Binds to 'Lys-48'-linked polyubiquitin chains in a length-dependent manner and with a lower affinity to 'Lys-63'-linked polyubiquitin chains. Proposed to be capable to bind simultaneously to the 26S proteasome and to polyubiquitinated substrates and to deliver ubiquitinated proteins to the proteasome. Functionally, involved in nucleotide excision repair and is thought to be functional equivalent for RAD23B in global genome nucleotide excision repair (GG-NER) by association with XPC. In vitro, XPC:RAD23A dimer has NER activity. Can stabilize XPC. This Bos taurus (Bovine) protein is UV excision repair protein RAD23 homolog A (RAD23A).